The following is a 709-amino-acid chain: RxLR effector protein PITG_15110 (709 aa).

An N-terminal signal peptide occupies residues 1 to 18 (MHAYSAAVLMGLLMVAEG). A RxLR-dEER motif is present at residues 51–66 (RLLREPETTEASNEDR).

The protein belongs to the RxLR effector family.

The protein localises to the secreted. It localises to the host cytoplasm. The protein resides in the host cytoskeleton. Effector that enhances P.infestans colonization of Nicotiana benthamiana leaves. The chain is RxLR effector protein PITG_15110 from Phytophthora infestans (strain T30-4) (Potato late blight agent).